The sequence spans 905 residues: Stonin-2 (905 aa).

3 disordered regions span residues 1–121, 178–205, and 244–263; these read MTTL…HQET, EQTS…VEME, and LPPV…SVIP. A compositionally biased stretch (low complexity) spans 40–50; the sequence is SSSPDQSESSS. Residues 60 to 73 are compositionally biased toward basic and acidic residues; it reads SQDHSHSEQDDSSE. Pro residues predominate over residues 85 to 94; sequence PGSPEQPPPD. Polar residues predominate over residues 178-196; sequence EQTSGQASGADSTDNSSSL. The segment covering 244 to 256 has biased composition (pro residues); the sequence is LPPVTSPLKPNTP. Position 255 is a phosphothreonine (T255). Phosphoserine is present on residues S281, S287, and S302. Short sequence motifs (NPF) lie at residues 313–315 and 329–331; these read NPF. In terms of domain architecture, SHD spans 427–560; the sequence is GWPMMLRIPE…DLPVLSMDLS (134 aa). An MHD domain is found at 568–878; it reads EEEITVDVRD…SYQVALGSIW (311 aa). S762 bears the Phosphoserine mark.

Belongs to the Stoned B family. As to quaternary structure, interacts with the second C2 domain of synaptotagmins SYT1 and SYT2. Interacts with EPS15, EPS15R and ITSN1. Interacts indirectly with the AP-2 adapter complex. Interacts with TOR1A and COPS4; the interaction controls STON2 protein stability. In terms of processing, phosphorylated in vitro by PKD. Post-translationally, neddylated; deneddylated via its interaction with the COP9 signalosome (CSN) complex through TOR1A and COPS4. Ubiquitinated; leading to its degradation. Ubiquitous.

It is found in the cytoplasm. The protein resides in the membrane. The protein localises to the synapse. Its subcellular location is the synaptosome. Its function is as follows. Adapter protein involved in endocytic machinery. Involved in the synaptic vesicle recycling. May facilitate clathrin-coated vesicle uncoating. The sequence is that of Stonin-2 (STON2) from Homo sapiens (Human).